The sequence spans 353 residues: COMPASS component SPP1 (353 aa).

Residues 22–72 (DVYCICKRPDYGELMVGCDGCDDWFHFTCLHIPEQFKDLVFSFYCPYCQAG) form a PHD-type zinc finger. Zn(2+) is bound by residues C25, C27, C39, C42, H47, C50, C66, and C69. A non coventional C3H-type zinc finger region spans residues 83–124 (NGEGSLPKTLWKRKCRISDCYKPCLQDSKYCSEEHGREFVND). Residue S87 is modified to Phosphoserine. Residues C97, C102, C113, and H117 each coordinate Zn(2+). Residues 235–244 (VECGKEDSKG) show a composition bias toward basic and acidic residues. The interval 235–255 (VECGKEDSKGTKRKKKKNSSR) is disordered. Positions 245 to 255 (TKRKKKKNSSR) are enriched in basic residues.

In terms of assembly, component of the Set1C/COMPASS complex which consists of SET1(2), BRE2(2), SPP1(2), SDC1(1), SHG1(1), SWD1(1), SWD2(1), and SWD3(1).

The protein resides in the nucleus. In terms of biological role, component of the Set1C/COMPASS complex that specifically mono-, di- and trimethylates histone H3 to form H3K4me1/2/3, which subsequently plays a role in telomere length maintenance and transcription elongation regulation. COMPASS recognizes ubiquitinated H2B on one face of the nucleosome which stimulates the methylation of H3 on the opposing face. SPP1/CPS40 can recognize methylated histone lysine residue H3K4me3 or unmethylated H3K4. Stimulates the RNA binding activity of SET1. This is COMPASS component SPP1 from Saccharomyces cerevisiae (strain ATCC 204508 / S288c) (Baker's yeast).